The following is a 422-amino-acid chain: Serine--tRNA ligase (422 aa).

231–233 (TSE) provides a ligand contact to L-serine. 262–264 (RQE) serves as a coordination point for ATP. Glu285 lines the L-serine pocket. 349–352 (EISS) is an ATP binding site. An L-serine-binding site is contributed by Ser384.

This sequence belongs to the class-II aminoacyl-tRNA synthetase family. Type-1 seryl-tRNA synthetase subfamily. Homodimer. The tRNA molecule binds across the dimer.

The protein resides in the cytoplasm. It carries out the reaction tRNA(Ser) + L-serine + ATP = L-seryl-tRNA(Ser) + AMP + diphosphate + H(+). The catalysed reaction is tRNA(Sec) + L-serine + ATP = L-seryl-tRNA(Sec) + AMP + diphosphate + H(+). It participates in aminoacyl-tRNA biosynthesis; selenocysteinyl-tRNA(Sec) biosynthesis; L-seryl-tRNA(Sec) from L-serine and tRNA(Sec): step 1/1. Its function is as follows. Catalyzes the attachment of serine to tRNA(Ser). Is also able to aminoacylate tRNA(Sec) with serine, to form the misacylated tRNA L-seryl-tRNA(Sec), which will be further converted into selenocysteinyl-tRNA(Sec). This Mycoplasma capricolum subsp. capricolum (strain California kid / ATCC 27343 / NCTC 10154) protein is Serine--tRNA ligase.